A 372-amino-acid polypeptide reads, in one-letter code: Cell division protein FtsZ 1 (372 aa).

GTP is bound by residues 51-55 (GAGCN), 138-140 (GTG), Glu-169, Arg-173, and Asp-216. A disordered region spans residues 352–372 (EETPAPSEEETTPVKIDIPEL).

Belongs to the FtsZ family. Homodimer. Polymerizes to form a dynamic ring structure in a strictly GTP-dependent manner. Interacts directly with several other division proteins.

The protein resides in the cytoplasm. Its function is as follows. Essential cell division protein that forms a contractile ring structure (Z ring) at the future cell division site. The regulation of the ring assembly controls the timing and the location of cell division. One of the functions of the FtsZ ring is to recruit other cell division proteins to the septum to produce a new cell wall between the dividing cells. Binds GTP and shows GTPase activity. The chain is Cell division protein FtsZ 1 from Pyrococcus horikoshii (strain ATCC 700860 / DSM 12428 / JCM 9974 / NBRC 100139 / OT-3).